We begin with the raw amino-acid sequence, 605 residues long: DNA mismatch repair protein MutL (605 aa).

Belongs to the DNA mismatch repair MutL/HexB family.

Its function is as follows. This protein is involved in the repair of mismatches in DNA. It is required for dam-dependent methyl-directed DNA mismatch repair. May act as a 'molecular matchmaker', a protein that promotes the formation of a stable complex between two or more DNA-binding proteins in an ATP-dependent manner without itself being part of a final effector complex. This is DNA mismatch repair protein MutL from Sinorhizobium medicae (strain WSM419) (Ensifer medicae).